A 319-amino-acid polypeptide reads, in one-letter code: MLASGMLLENRLVERRSIIRLVEENFRDHFPSDQELPGLEFFPLGEDSWSYRCGPLWISVRRDLDGHFPGAYEVSLLLSESGKGYVLAPLPGRNGRVVHRIADFPVVVFPYVESATTPPAPPTQEQIDLLIARLGEVHAFEPPASRPVDVPTEDFRFPFENDLDKAVQAALNGDAAAGGPYAGLLAERVDRCQGFLAELREEATRVAGECAARWRGERPALTHGDPSLANVLFTKGVDIIDWGGAMWAPPERDWAALQRVFGTAPRSRPEFLRFYELRWHLAEIAEYATRFTGPHTGDADDDAMWERLTRYLPEPRGAS.

The protein operates within antibiotic biosynthesis; streptomycin biosynthesis. This Streptomyces griseus protein is Protein StrN (strN).